The chain runs to 141 residues: Large ribosomal subunit protein uL16 (141 aa).

Residues Met-1–Ala-21 form a disordered region.

It belongs to the universal ribosomal protein uL16 family. Part of the 50S ribosomal subunit.

Its function is as follows. Binds 23S rRNA and is also seen to make contacts with the A and possibly P site tRNAs. This chain is Large ribosomal subunit protein uL16, found in Roseiflexus castenholzii (strain DSM 13941 / HLO8).